A 371-amino-acid chain; its full sequence is Probable beta-1,4-xylosyltransferase GT43A (371 aa).

Residues 1–19 (MGTAAVAAAERPKQRRSSH) lie on the Cytoplasmic side of the membrane. A helical; Signal-anchor for type II membrane protein membrane pass occupies residues 20–42 (LWKKALLHFSLCFVMGFFTGFAP). The Lumenal segment spans residues 43-371 (SSSSSWRAGS…TSTPKTHNRR (329 aa)). Asn176 and Asn299 each carry an N-linked (GlcNAc...) asparagine glycan.

It belongs to the glycosyltransferase 43 family.

It localises to the golgi apparatus membrane. Probable beta-1,4-xylosyltransferase involved in xylan biosynthesis in cell walls. The chain is Probable beta-1,4-xylosyltransferase GT43A from Oryza sativa subsp. japonica (Rice).